Consider the following 920-residue polypeptide: KIN14B-interacting protein At4g14310 (920 aa).

Positions 1-10 (MSASTNRRRL) are enriched in basic residues. 2 disordered regions span residues 1–199 (MSAS…EKST) and 309–375 (IDGP…EKPS). Polar residues predominate over residues 35 to 54 (PISSKNSNPALQKSLSSKEN). The segment covering 90 to 105 (TRSTSSGLRGRSSSPS) has biased composition (low complexity). Residues 112–135 (SDLRKRNESRVIGEKGESGQDKKS) show a composition bias toward basic and acidic residues. Polar residues-rich tracts occupy residues 137–147 (LKSSGFKQGTS) and 166–184 (CPVN…NSIS). Positions 327 to 337 (LNKEELEDRLL) are enriched in basic and acidic residues. Residues 345 to 355 (SRTQSKTSSHV) show a composition bias toward polar residues. Positions 357 to 374 (KGHDSVESNKAVNAEEKP) are enriched in basic and acidic residues. The stretch at 435–463 (TEILRANEALEEIDDEENREEMELEEIDD) forms a coiled coil.

In terms of assembly, interacts with KIN14B, CDKA-1, CKS1 and CKS2.

The protein resides in the cytoplasm. Might be involved in division plane determination. The chain is KIN14B-interacting protein At4g14310 from Arabidopsis thaliana (Mouse-ear cress).